The sequence spans 481 residues: Glutamate-1-semialdehyde 2,1-aminomutase, chloroplastic (481 aa).

The tract at residues 18–40 (NQTPKWGFSPSHRRCNPSSSSSA) is disordered. Lys321 carries the post-translational modification N6-(pyridoxal phosphate)lysine.

It belongs to the class-III pyridoxal-phosphate-dependent aminotransferase family. HemL subfamily. As to quaternary structure, homodimer. Requires pyridoxal 5'-phosphate as cofactor.

The protein localises to the plastid. Its subcellular location is the chloroplast. It catalyses the reaction (S)-4-amino-5-oxopentanoate = 5-aminolevulinate. Its pathway is porphyrin-containing compound metabolism; protoporphyrin-IX biosynthesis; 5-aminolevulinate from L-glutamyl-tRNA(Glu): step 2/2. It functions in the pathway porphyrin-containing compound metabolism; chlorophyll biosynthesis. The polypeptide is Glutamate-1-semialdehyde 2,1-aminomutase, chloroplastic (Solanum lycopersicum (Tomato)).